A 625-amino-acid polypeptide reads, in one-letter code: Histone-lysine N-methyltransferase set9 (625 aa).

One can recognise an SET domain in the interval 120–234; that stretch reads SPFEVTTTNR…IGEEITVSYG (115 aa). 5 disordered regions span residues 260–348, 368–405, 432–451, 457–476, and 582–625; these read PHVD…ETSI, GSAVEVSQASATDCDSSPSLEADESHHSSTSTTPTSIG, ITGQPHNDRHPPGTDNDMLS, TDNPQKPKRSRGSRWKHGVV, and VSFG…RMTM. Composition is skewed to polar residues over residues 269 to 286 and 372 to 386; these read SKASTPALNDEAISNDSL and EVSQASATDCDSSPS. Basic residues predominate over residues 462–473; the sequence is KPKRSRGSRWKH. The segment covering 593 to 610 has biased composition (basic and acidic residues); that stretch reads SEPRTETEDSEACDDRRN. The span at 611–625 shows a compositional bias: basic residues; the sequence is TRASRTRTRSLRMTM.

It belongs to the class V-like SAM-binding methyltransferase superfamily. Histone-lysine methyltransferase family. Suvar4-20 subfamily.

The protein resides in the nucleus. It localises to the chromosome. It catalyses the reaction L-lysyl(20)-[histone H4] + 3 S-adenosyl-L-methionine = N(6),N(6),N(6)-trimethyl-L-lysyl(20)-[histone H4] + 3 S-adenosyl-L-homocysteine + 3 H(+). Its function is as follows. Histone methyltransferase that trimethylates 'Lys-20' of histone H4 to form H4K20me3. The sequence is that of Histone-lysine N-methyltransferase set9 (set9) from Aspergillus oryzae (strain ATCC 42149 / RIB 40) (Yellow koji mold).